The chain runs to 252 residues: MTQAASAAPSWSIDPADVARFSAIAAEWWDPKGKFAPLHVFNPCRLAFIREQALARFDRDGAARAPFEGLTLLDIGCGGGLLSEPMARLGFAVTAIDASEKNIKTAATHAAEQGLDIGYRPATAEQLLAEGAGPFDVVLTMEVIEHVADPGEFLRTCAKLLKPGGIMFVATLNRTLKALALAKIGAEYVLRWVPPGTHDWKQFLKPEELRAFLAGEPVAMQGPFGVAYNPLTGRWSRSSDTDINYMMTVTKD.

S-adenosyl-L-methionine-binding residues include arginine 45, glycine 76, aspartate 97, and methionine 141.

This sequence belongs to the methyltransferase superfamily. UbiG/COQ3 family.

It carries out the reaction a 3-demethylubiquinol + S-adenosyl-L-methionine = a ubiquinol + S-adenosyl-L-homocysteine + H(+). The catalysed reaction is a 3-(all-trans-polyprenyl)benzene-1,2-diol + S-adenosyl-L-methionine = a 2-methoxy-6-(all-trans-polyprenyl)phenol + S-adenosyl-L-homocysteine + H(+). Its pathway is cofactor biosynthesis; ubiquinone biosynthesis. In terms of biological role, O-methyltransferase that catalyzes the 2 O-methylation steps in the ubiquinone biosynthetic pathway. This is Ubiquinone biosynthesis O-methyltransferase from Caulobacter vibrioides (strain ATCC 19089 / CIP 103742 / CB 15) (Caulobacter crescentus).